Reading from the N-terminus, the 99-residue chain is Integration host factor subunit alpha (99 aa).

The interval 49–72 is disordered; that stretch reads FGNFDLRDKNQRPGRNPKTGEDIP.

It belongs to the bacterial histone-like protein family. Heterodimer of an alpha and a beta chain.

Functionally, this protein is one of the two subunits of integration host factor, a specific DNA-binding protein that functions in genetic recombination as well as in transcriptional and translational control. The protein is Integration host factor subunit alpha of Escherichia coli O9:H4 (strain HS).